Consider the following 393-residue polypeptide: Putative odorant receptor 69a, isoform B (393 aa).

Residues 1–39 (MQLEDFMRYPDLVCQAAQLPRYTWNGRRSLEVKRNLAKR) lie on the Cytoplasmic side of the membrane. Residues 40–60 (IIFWLGAVNLVYHNIGCVMYG) form a helical membrane-spanning segment. Residues 61-69 (YFGDGRTKD) lie on the Extracellular side of the membrane. A helical membrane pass occupies residues 70–90 (PIAYLAELASVASMLGFTIVG). Residues 91–138 (TLNLWKMLSLKTHFENLLNEFEELFQLIKHRAYRIHHYQEKYTRHIRN) lie on the Cytoplasmic side of the membrane. Residues 139–159 (TFIFHTSAVVYYNSLPILLMI) form a helical membrane-spanning segment. The Extracellular segment spans residues 160–208 (REHFSNSQQLGYRIQSNTWYPWQVQGSIPGFFAAVACQIFSCQTNMCVN). The chain crosses the membrane as a helical span at residues 209–229 (MFIQFLINFFGIQLEIHFDGL). The Cytoplasmic segment spans residues 230–269 (ARQLETIDARNPHAKDQLKYLIVYHTKLLNLADRVNRSFN). A helical membrane pass occupies residues 270-290 (FTFLISLSVSMISNCFLAFSM). The Extracellular segment spans residues 291 to 305 (TMFDFGTSLKHLLGL). The helical transmembrane segment at 306 to 326 (LLFITYNFSMCRSGTHLILTS) threads the bilayer. At 327-365 (GKVLPAAFYNNWYEGDLVYRRMLLILMMRATKPYMWKTY) the chain is on the cytoplasmic side. Residues 366–386 (KLAPVSITTYMATLKFSYQMF) traverse the membrane as a helical segment. Residues 387–393 (TCVRSLK) lie on the Extracellular side of the membrane.

This sequence belongs to the insect chemoreceptor superfamily. Heteromeric odorant receptor channel (TC 1.A.69) family. Or49a subfamily. As to quaternary structure, interacts with Orco. Complexes exist early in the endomembrane system in olfactory sensory neurons (OSNs), coupling these complexes to the conserved ciliary trafficking pathway. Expressed in olfactory sensory neurons in the antenna.

The protein localises to the cell membrane. In terms of biological role, odorant receptor which mediates acceptance or avoidance behavior, depending on its substrates. The odorant receptor repertoire encodes a large collection of odor stimuli that vary widely in identity, intensity, and duration. May form a complex with Orco to form odorant-sensing units, providing sensitive and prolonged odorant signaling and calcium permeability. In Drosophila melanogaster (Fruit fly), this protein is Putative odorant receptor 69a, isoform B (Or69a).